Here is a 183-residue protein sequence, read N- to C-terminus: Threonylcarbamoyl-AMP synthase (183 aa).

The 183-residue stretch at 1–183 folds into the YrdC-like domain; the sequence is MNITQIIEKL…LFTNQLVRQG (183 aa).

The protein belongs to the SUA5 family. TsaC subfamily.

The protein resides in the cytoplasm. It catalyses the reaction L-threonine + hydrogencarbonate + ATP = L-threonylcarbamoyladenylate + diphosphate + H2O. Required for the formation of a threonylcarbamoyl group on adenosine at position 37 (t(6)A37) in tRNAs that read codons beginning with adenine. Catalyzes the conversion of L-threonine, HCO(3)(-)/CO(2) and ATP to give threonylcarbamoyl-AMP (TC-AMP) as the acyladenylate intermediate, with the release of diphosphate. This is Threonylcarbamoyl-AMP synthase from Histophilus somni (strain 129Pt) (Haemophilus somnus).